The following is a 105-amino-acid chain: Heat shock protein HspQ (105 aa).

The disordered stretch occupies residues S74–N105.

This sequence belongs to the HspQ family.

The protein localises to the cytoplasm. Involved in the degradation of certain denaturated proteins, including DnaA, during heat shock stress. This Citrobacter koseri (strain ATCC BAA-895 / CDC 4225-83 / SGSC4696) protein is Heat shock protein HspQ.